The sequence spans 570 residues: DNA polymerase/3'-5' exonuclease PolX (570 aa).

Positions 1 to 315 are DNA polymerase type-X; it reads MHKKDIIRLL…PLIPPEIRES (315 aa). Residues Asp193, Asp195, and Asp240 each contribute to the a divalent metal cation site. The 3'-5' exonuclease stretch occupies residues 333–570; the sequence is QIKGDLHMHS…DVEAFLKRND (238 aa). Mn(2+) contacts are provided by His339, His341, His371, Glu410, His437, His465, Asp526, and His528.

It in the N-terminal section; belongs to the DNA polymerase type-X family. This sequence in the C-terminal section; belongs to the PHP family. As to quaternary structure, monomer. Requires Mn(2+) as cofactor. Mg(2+) is required as a cofactor.

The catalysed reaction is DNA(n) + a 2'-deoxyribonucleoside 5'-triphosphate = DNA(n+1) + diphosphate. It catalyses the reaction Exonucleolytic cleavage in the 3'- to 5'-direction to yield nucleoside 5'-phosphates.. With respect to regulation, the polymerization activity is inhibited in the presence of 2'-3'-dideoxynucleoside 5'-triphosphate (ddNTP). Functionally, strictly DNA-template-directed DNA polymerase, preferentially acting on DNA structures containing gaps from one to a few nucleotides and bearing a phosphate group at the 5' end of the downstream DNA. The fact that PolX is able to conduct filling of a single-nucleotide gap, allowing further sealing of the resulting nick by a DNA ligase, points to a putative role in base excision repair (BER) during the B.subtilis life cycle. Moreover, also possesses a 3'-5' exonuclease activity able to edit unpaired 3'-termini in a gapped DNA substrate and likely involved in resecting unannealed 3'-termini during DNA repair. The same PolX molecule could perform the subsequent gap-filling step. Does not display 5'-deoxyribose 5'-phosphate (dRP) lyase activity, as predicted by the lack of the lysine and tyrosine residues responsible for the dRP lyase activity in some other PolX members. The polypeptide is DNA polymerase/3'-5' exonuclease PolX (polX) (Bacillus subtilis (strain 168)).